The following is a 504-amino-acid chain: Putative F-box/FBD/LRR-repeat protein At3g59240 (504 aa).

One can recognise an F-box domain in the interval Lys-7–Ser-60. 7 LRR repeats span residues His-69–Cys-95, Arg-145–Ser-171, Trp-173–Asp-198, Thr-286–Cys-312, Asp-329–Gly-354, Cys-369–Glu-396, and Asp-403–Tyr-428. In terms of domain architecture, FBD spans Ser-382 to His-427.

This is Putative F-box/FBD/LRR-repeat protein At3g59240 from Arabidopsis thaliana (Mouse-ear cress).